Here is a 161-residue protein sequence, read N- to C-terminus: Extracellular giant hemoglobin major globin subunit B1 (161 aa).

Positions 1-16 (MTILVLFLSCAALASA) are cleaved as a signal peptide. Residues 18-161 (CCSRGDAEVV…YIAAGIGAGL (144 aa)) enclose the Globin domain. A disulfide bridge connects residues Cys-19 and Cys-149. A heme b-binding site is contributed by His-112.

It belongs to the globin family. The 400 kDa hemoglobin consists of a spherical 24-mer arranged as a double layer of dome-shaped dodecamers. Each dodecamer is composed of the 3-fold trimer of the tetramer A1-A2-B1-B2 having one intra-tetramer (A1-B2) disulfide bond and one inter-tetramer (B1-B2) disulfide bond per tetramer.

The protein resides in the secreted. In terms of biological role, the extracellular giant hemoglobin is able to bind and transport oxygen and sulfide simultaneously and reversibly at two different sites. The protein is Extracellular giant hemoglobin major globin subunit B1 (ghbB1) of Oligobrachia mashikoi (Beard worm).